The primary structure comprises 416 residues: Multifunctional CCA protein (416 aa).

Residues glycine 8 and arginine 11 each coordinate ATP. 2 residues coordinate CTP: glycine 8 and arginine 11. Positions 21 and 23 each coordinate Mg(2+). ATP contacts are provided by arginine 91, arginine 137, and arginine 140. Residues arginine 91, arginine 137, and arginine 140 each contribute to the CTP site. The HD domain occupies 228 to 329 (TGLHTMMVLA…IKLFDKADFW (102 aa)).

Belongs to the tRNA nucleotidyltransferase/poly(A) polymerase family. Bacterial CCA-adding enzyme type 1 subfamily. Monomer. Can also form homodimers and oligomers. Mg(2+) serves as cofactor. The cofactor is Ni(2+).

The enzyme catalyses a tRNA precursor + 2 CTP + ATP = a tRNA with a 3' CCA end + 3 diphosphate. The catalysed reaction is a tRNA with a 3' CCA end + 2 CTP + ATP = a tRNA with a 3' CCACCA end + 3 diphosphate. Its function is as follows. Catalyzes the addition and repair of the essential 3'-terminal CCA sequence in tRNAs without using a nucleic acid template. Adds these three nucleotides in the order of C, C, and A to the tRNA nucleotide-73, using CTP and ATP as substrates and producing inorganic pyrophosphate. tRNA 3'-terminal CCA addition is required both for tRNA processing and repair. Also involved in tRNA surveillance by mediating tandem CCA addition to generate a CCACCA at the 3' terminus of unstable tRNAs. While stable tRNAs receive only 3'-terminal CCA, unstable tRNAs are marked with CCACCA and rapidly degraded. This chain is Multifunctional CCA protein, found in Shewanella sp. (strain MR-7).